The chain runs to 368 residues: uncharacterized protein (368 aa).

This is an uncharacterized protein from Archaeoglobus fulgidus (strain ATCC 49558 / DSM 4304 / JCM 9628 / NBRC 100126 / VC-16).